Consider the following 519-residue polypeptide: Aldehyde dehydrogenase X, mitochondrial (519 aa).

The N-terminal 19 residues, 1–19 (MLNARFLVPRLLCLQGRTT), are a transit peptide targeting the mitochondrion. Lysine 53 is subject to N6-acetyllysine. An N6-acetyllysine; alternate modification is found at lysine 54. Lysine 54 is modified (N6-succinyllysine; alternate). Position 264-269 (264-269 (GSTEVG)) interacts with NAD(+). The active-site Proton acceptor is glutamate 287. The Nucleophile role is filled by cysteine 321. Lysine 366, lysine 385, lysine 401, and lysine 428 each carry N6-acetyllysine; alternate. An N6-succinyllysine; alternate mark is found at lysine 366, lysine 385, lysine 401, and lysine 428. Residue lysine 431 is modified to N6-acetyllysine.

The protein belongs to the aldehyde dehydrogenase family. Homotetramer.

Its subcellular location is the mitochondrion matrix. The enzyme catalyses an aldehyde + NAD(+) + H2O = a carboxylate + NADH + 2 H(+). It participates in alcohol metabolism; ethanol degradation; acetate from ethanol: step 2/2. ALDHs play a major role in the detoxification of alcohol-derived acetaldehyde. They are involved in the metabolism of corticosteroids, biogenic amines, neurotransmitters, and lipid peroxidation. In Rattus norvegicus (Rat), this protein is Aldehyde dehydrogenase X, mitochondrial (Aldh1b1).